The primary structure comprises 1072 residues: DNA-directed RNA polymerase subunit beta (1072 aa).

This sequence belongs to the RNA polymerase beta chain family. As to quaternary structure, in plastids the minimal PEP RNA polymerase catalytic core is composed of four subunits: alpha, beta, beta', and beta''. When a (nuclear-encoded) sigma factor is associated with the core the holoenzyme is formed, which can initiate transcription.

The protein resides in the plastid. The protein localises to the chloroplast. It catalyses the reaction RNA(n) + a ribonucleoside 5'-triphosphate = RNA(n+1) + diphosphate. Functionally, DNA-dependent RNA polymerase catalyzes the transcription of DNA into RNA using the four ribonucleoside triphosphates as substrates. The chain is DNA-directed RNA polymerase subunit beta from Arabidopsis thaliana (Mouse-ear cress).